We begin with the raw amino-acid sequence, 319 residues long: tRNA-modifying protein YgfZ (319 aa).

Trp27 and Trp189 together coordinate folate.

Belongs to the tRNA-modifying YgfZ family.

The protein localises to the cytoplasm. Functionally, folate-binding protein involved in regulating the level of ATP-DnaA and in the modification of some tRNAs. It is probably a key factor in regulatory networks that act via tRNA modification, such as initiation of chromosomal replication. This chain is tRNA-modifying protein YgfZ, found in Buchnera aphidicola subsp. Schizaphis graminum (strain Sg).